A 417-amino-acid polypeptide reads, in one-letter code: mRNA export factor ICP27 homolog (417 aa).

Residues 1-28 show a composition bias toward acidic residues; it reads MEDIIEGGISSDDDFDSSDSSSDEEESD. Positions 1-143 are disordered; sequence MEDIIEGGIS…NGPLRNGPPR (143 aa). The interaction with RNA stretch occupies residues 64–120; the sequence is RQRSPITWEHQSPLSRVYRSPSPMRFGKRPRISSNSTSRSCKTSWADRVREAAAQRR. The Nuclear localization signal signature appears at 88 to 94; that stretch reads RFGKRPR. Residues 96–107 show a composition bias toward low complexity; that stretch reads SSNSTSRSCKTS. Residues 106–120 form an interaction with host ALYREF or mouse ALYREF2 region; sequence TSWADRVREAAAQRR. Residues 108–117 are compositionally biased toward basic and acidic residues; sequence WADRVREAAA. The short motif at 118–127 is the Nuclear localization signal element; that stretch reads QRRPSRPFRK. Over residues 120–130 the composition is skewed to basic residues; sequence RPSRPFRKPYS. Low complexity predominate over residues 132–141; it reads PRNGPLRNGP. C295, H385, C389, and C394 together coordinate Zn(2+). Residues 295 to 394 form a CHC2-type zinc finger; it reads CLMQTTPQDH…HLNKCPSSTC (100 aa).

The protein belongs to the HHV-1 ICP27 protein family. In terms of assembly, homodimer. Homodimerization is required for transactivation. Interacts with host ALYREF and with mouse ALYREF2. Associates in a complex with RNA, and host export factors NXF1/TAP and ALYREF or ALYREF2; these interactions allow nuclear export of viral transcripts.

It is found in the host cytoplasm. Its subcellular location is the host nucleus. Probably acts as a viral splicing factor that regulates viral RNA splicing. Functions as a multifunctional regulator of the expression of viral lytic genes. Early protein that promotes the accumulation and nuclear export of viral intronless RNA transcripts by interacting with mRNAs and cellular export proteins. The polypeptide is mRNA export factor ICP27 homolog (EJRF1) (Saimiriine herpesvirus 2 (strain 11) (SaHV-2)).